The primary structure comprises 275 residues: Large ribosomal subunit protein uL2c (275 aa).

Disordered regions lie at residues 1–28 (MGIR…TKSK) and 227–251 (PCDH…TPWG). Over residues 10–22 (TPGTRNRSSSDFS) the composition is skewed to polar residues.

Belongs to the universal ribosomal protein uL2 family. In terms of assembly, part of the 50S ribosomal subunit.

It is found in the plastid. The protein localises to the chloroplast. This Rhodomonas salina (Cryptomonas salina) protein is Large ribosomal subunit protein uL2c (rpl2).